A 373-amino-acid chain; its full sequence is RNA 3'-terminal phosphate cyclase-like protein (373 aa).

It belongs to the RNA 3'-terminal cyclase family. Type 2 subfamily. As to quaternary structure, part of the small subunit (SSU) processome, composed of more than 70 proteins and the RNA chaperone small nucleolar RNA (snoRNA) U3. Interacts with BMS1.

Its subcellular location is the nucleus. It is found in the nucleolus. In terms of biological role, as part of the small subunit (SSU) processome, it plays a role in 40S-ribosomal-subunit biogenesis in the early pre-rRNA processing steps at sites A0, A1 and A2 that are required for proper maturation of the 18S RNA. Activates BMS1 by promoting GDP/GTP exchange. Does not have cyclase activity. This Mus musculus (Mouse) protein is RNA 3'-terminal phosphate cyclase-like protein (Rcl1).